Here is a 37-residue protein sequence, read N- to C-terminus: Large ribosomal subunit protein bL36 (37 aa).

Belongs to the bacterial ribosomal protein bL36 family.

This chain is Large ribosomal subunit protein bL36, found in Aromatoleum aromaticum (strain DSM 19018 / LMG 30748 / EbN1) (Azoarcus sp. (strain EbN1)).